The following is a 461-amino-acid chain: UDP-N-acetylmuramate--L-alanine ligase (461 aa).

112 to 118 (GTHGKTT) contributes to the ATP binding site.

The protein belongs to the MurCDEF family.

Its subcellular location is the cytoplasm. It catalyses the reaction UDP-N-acetyl-alpha-D-muramate + L-alanine + ATP = UDP-N-acetyl-alpha-D-muramoyl-L-alanine + ADP + phosphate + H(+). The protein operates within cell wall biogenesis; peptidoglycan biosynthesis. Its function is as follows. Cell wall formation. The sequence is that of UDP-N-acetylmuramate--L-alanine ligase from Hydrogenovibrio crunogenus (strain DSM 25203 / XCL-2) (Thiomicrospira crunogena).